A 362-amino-acid polypeptide reads, in one-letter code: Adenosine deaminase (362 aa).

Residues H19 and H21 each contribute to the Zn(2+) site. Residues H21, D23, and G181 each coordinate substrate. H208 lines the Zn(2+) pocket. E211 acts as the Proton donor in catalysis. D300 lines the Zn(2+) pocket.

The protein belongs to the metallo-dependent hydrolases superfamily. Adenosine and AMP deaminases family. Adenosine deaminase subfamily. Zn(2+) serves as cofactor.

It catalyses the reaction adenosine + H2O + H(+) = inosine + NH4(+). The catalysed reaction is 2'-deoxyadenosine + H2O + H(+) = 2'-deoxyinosine + NH4(+). Catalyzes the hydrolytic deamination of adenosine and 2-deoxyadenosine. The polypeptide is Adenosine deaminase (Mycobacterium marinum (strain ATCC BAA-535 / M)).